The chain runs to 208 residues: Protein-L-isoaspartate O-methyltransferase (208 aa).

Residue Ser-59 is part of the active site.

This sequence belongs to the methyltransferase superfamily. L-isoaspartyl/D-aspartyl protein methyltransferase family.

It localises to the cytoplasm. It catalyses the reaction [protein]-L-isoaspartate + S-adenosyl-L-methionine = [protein]-L-isoaspartate alpha-methyl ester + S-adenosyl-L-homocysteine. Functionally, catalyzes the methyl esterification of L-isoaspartyl residues in peptides and proteins that result from spontaneous decomposition of normal L-aspartyl and L-asparaginyl residues. It plays a role in the repair and/or degradation of damaged proteins. This Cronobacter sakazakii (strain ATCC BAA-894) (Enterobacter sakazakii) protein is Protein-L-isoaspartate O-methyltransferase.